A 2377-amino-acid polypeptide reads, in one-letter code: Serine/threonine-protein kinase WNK1 (2377 aa).

Disordered regions lie at residues 1–79 and 93–203; these read MSDG…RFFR and LPGL…QQDD. Residues T17 and T58 each carry the phosphothreonine modification. A compositionally biased stretch (basic and acidic residues) spans 48–64; that stretch reads RTEEYRRRRHTMDKDSR. 2 stretches are compositionally biased toward low complexity: residues 101 to 111 and 127 to 141; these read PQPSVPAVVPQ and VASQ…AASP. Positions 149 to 158 are enriched in polar residues; sequence SATTTVPSST. Residues S165 and S172 each carry the phosphoserine modification. Residues 221 to 479 form the Protein kinase domain; sequence LKFDIEIGRG…IKDLLNHAFF (259 aa). Residue S231 participates in ATP binding. The chloride site is built by F283 and L299. Residues 301 to 304 and K351 each bind ATP; that span reads TELM. D368 (proton acceptor) is an active-site residue. Chloride-binding residues include L369 and L371. Phosphoserine; by autocatalysis is present on residues S378 and S382. The interval 488–555 is autoinhibitory domain; it reads ELAEEDDGEK…VCEGDHKTMA (68 aa). Residues 573 to 588 show a composition bias toward basic and acidic residues; the sequence is QLVREEQEKRKQEESS. 2 disordered regions span residues 573–782 and 1013–1114; these read QLVR…SAGT and PAVS…SRPK. Polar residues-rich tracts occupy residues 593-628, 638-705, and 713-733; these read NEQQ…STQV, HQQL…QSQP, and SMAQ…VLSS. The interval 629–639 is interaction with KLHL3; sequence EPEEPEADQHQ. Low complexity predominate over residues 734–746; it reads QPIQHPQQQGIQP. Positions 747–782 are enriched in polar residues; that stretch reads TVPSQQAVQYSLPQAASSSEGTTAQPVSQPQVSAGT. Residues 1018–1028 show a composition bias toward low complexity; sequence TQQPPTTSSQQ. Positions 1029-1038 are enriched in polar residues; the sequence is AVLESTQGVS. Low complexity predominate over residues 1042 to 1058; sequence PPEQTPITQSQPTQPVP. Over residues 1075–1085 the composition is skewed to polar residues; the sequence is SDGNENAPSSS. Basic residues predominate over residues 1093–1114; it reads TKRHYRKSVRSRSRHEKTSRPK. The short motif at 1252 to 1255 is the RFXV motif 1 element; that stretch reads RFIV. S1256 is subject to Phosphoserine. 2 disordered regions span residues 1726–1760 and 1818–1847; these read GQVS…TVVP and TMSS…SSGA. Low complexity predominate over residues 1738–1748; it reads PVGTATGVKPG. Phosphothreonine is present on T1843. An RFXV motif 2 motif is present at residues 1854 to 1857; sequence RFQV. Positions 1860-1945 are disordered; sequence TMDDAQKERK…TKVGRFQVTT (86 aa). The span at 1863–1879 shows a compositional bias: basic and acidic residues; that stretch reads DAQKERKNRSEDTKSVH. The span at 1882–1900 shows a compositional bias: low complexity; sequence SSTSESSVLSSSSPESTLV. 2 consecutive short sequence motifs (RFXV motif) follow at residues 1940–1943 and 1952–1955; these read RFQV and RFSV. Positions 1959 to 1969 are enriched in basic and acidic residues; the sequence is EDKVTELKKEG. 5 disordered regions span residues 1959–1984, 1989–2008, 2015–2064, 2107–2191, and 2203–2239; these read EDKV…QTVI, PKKE…PSSD, SRGT…DIED, VIIP…NLYS, and SLSA…SRKG. Phosphoserine is present on S1973. The segment covering 1989–1998 has biased composition (basic and acidic residues); that stretch reads PKKEKPELAE. 5 positions are modified to phosphoserine: S2006, S2007, S2022, S2024, and S2027. Over residues 2035-2057 the composition is skewed to low complexity; the sequence is SLPVQNLSQSLSNSFNSSYMSSD. S2116 carries the phosphoserine modification. The segment covering 2117–2129 has biased composition (basic residues); sequence GRRRRPTKSKGSK. Over residues 2130–2140 the composition is skewed to low complexity; the sequence is SSRSSSLGNKS. Positions 2141–2191 are enriched in polar residues; the sequence is PQLSGNLSGQSGTSVLHPQQTLHPAGNTPETGHNQLLQPLKPSPSSDNLYS. Positions 2208 to 2232 are enriched in low complexity; the sequence is GQGTSSTNTVGGTVSSQAAQAQPPA. Residues 2236–2256 form an amphipathic alpha-helix region; that stretch reads SRKGTFTDDLHKLVDNWARDA. Phosphoserine occurs at positions 2265 and 2281. Positions 2325-2344 are disordered; the sequence is PAPFGTQWSGTGGPAPQPLG. S2365 and S2367 each carry phosphoserine.

This sequence belongs to the protein kinase superfamily. Ser/Thr protein kinase family. WNK subfamily. As to quaternary structure, interacts with WNK3. Interacts with WNK4; inhibiting the activity of WNK4. Interacts with SGK1; promoting its activation. Associates with the mTORC2 complex. Interacts with UVRAG. In terms of assembly, interacts with isoform 1; inhibiting isoform 1 activity. Mg(2+) is required as a cofactor. In terms of processing, autophosphorylated at Ser-378 and Ser-382, promoting its activity. Autophosphorylation at Ser-382 is inhibited by intracellular calcium. Phosphorylation at Thr-58 increases ability to activate SGK1. Ubiquitinated by the BCR(KLHL3) complex, leading to its degradation. Also ubiquitinated by the BCR(KLHL2) complex. Post-translationally, may be O-glycosylated. As to expression, widely expressed in both adult and embryonic tissue, with highest levels observed in the testis and lower levels in heart, lung, kidney, placenta, brain and skeletal muscle. Expressed in pancreatic duct. Two isoforms are expressed in heart, a single shorter isoform in the kidney. Locates to the distal convoluted tubule, the medullary collecting duct and the cortical collecting duct of the kidney. In terms of tissue distribution, restricted to the nervous system, expressed preferentially in sensory neurons than in motor neurons and in general more abundant in axons than in cell bodies (at protein level). In the DRG, predominantly expressed in the satellite cells that envelop sensory neurons, but low expression also observed in the cell bodies of neurons (at protein level). In the sciatic nerve, expressed in the Schwann cells that surround axons and in a mosaic distribution of axons (at protein level). In the spinal cord, expressed in superficial layers (LI and LII), as well as in the fibers of the Lissauer tract (at protein level). Also detected in the axon fibers of dorsolateral funiculus and lateral funiculus (at protein level).

The protein localises to the cytoplasm. It is found in the nucleus. Its subcellular location is the cytoskeleton. The protein resides in the spindle. It catalyses the reaction L-seryl-[protein] + ATP = O-phospho-L-seryl-[protein] + ADP + H(+). It carries out the reaction L-threonyl-[protein] + ATP = O-phospho-L-threonyl-[protein] + ADP + H(+). Activated in response to hyperosmotic stress: cell shrinkage promotes formation of a membraneless compartment that concentrates WNK1 with its substrates, OXSR1/OSR1 and STK39/SPAK. Activation requires autophosphorylation of Ser-382 and, to a lower extent, Ser-378. Autophosphorylation and subsequent activation is inhibited by increases in intracellular ionic strength: Cl(-) potently inhibits WNK1 kinase activity via direct binding. Also inhibited by K(+) ions. Serine/threonine-protein kinase component of the WNK1-SPAK/OSR1 kinase cascade, which acts as a key regulator of blood pressure and regulatory volume increase by promoting ion influx. WNK1 mediates regulatory volume increase in response to hyperosmotic stress by acting as a molecular crowding sensor, which senses cell shrinkage and mediates formation of a membraneless compartment by undergoing liquid-liquid phase separation. The membraneless compartment concentrates WNK1 with its substrates, OXSR1/OSR1 and STK39/SPAK, promoting WNK1-dependent phosphorylation and activation of downstream kinases OXSR1/OSR1 and STK39/SPAK. Following activation, OXSR1/OSR1 and STK39/SPAK catalyze phosphorylation of ion cotransporters SLC12A1/NKCC2, SLC12A2/NKCC1, SLC12A5/KCC2 and SLC12A6/KCC3, regulating their activity. Phosphorylation of Na-K-Cl cotransporters SLC12A2/NKCC1 and SLC12A2/NKCC1 promote their activation and ion influx; simultaneously, phosphorylation of K-Cl cotransporters SLC12A5/KCC2 and SLC12A6/KCC3 inhibit their activity, blocking ion efflux. Also acts as a regulator of angiogenesis in endothelial cells. Also acts independently of the WNK1-SPAK/OSR1 kinase cascade by catalyzing phosphorylation of other substrates, such as SYT2, PCF11 and NEDD4L. Mediates phosphorylation of SYT2, regulating SYT2 association with phospholipids and membrane-binding. Regulates mRNA export in the nucleus by mediating phosphorylation of PCF11, thereby decreasing the association between PCF11 and POLR2A/RNA polymerase II and promoting mRNA export to the cytoplasm. Acts as a negative regulator of autophagy. Required for the abscission step during mitosis, independently of the WNK1-SPAK/OSR1 kinase cascade. WNK1 may also play a role in actin cytoskeletal reorganization. Also acts as a scaffold protein independently of its protein kinase activity: negatively regulates cell membrane localization of various transporters and channels, such as SLC4A4, SLC26A6, SLC26A9, TRPV4 and CFTR. Involved in the regulation of epithelial Na(+) channel (ENaC) by promoting activation of SGK1 in a kinase-independent manner: probably acts as a scaffold protein that promotes the recruitment of SGK1 to the mTORC2 complex in response to chloride, leading to mTORC2-dependent phosphorylation and activation of SGK1. Acts as an assembly factor for the ER membrane protein complex independently of its protein kinase activity: associates with EMC2 in the cytoplasm via its amphipathic alpha-helix, and prevents EMC2 ubiquitination and subsequent degradation, thereby promoting EMC2 stabilization. Functionally, kinase-defective isoform specifically expressed in kidney, which acts as a dominant-negative regulator of the longer isoform 1. Does not directly inhibit WNK4 and has no direct effect on sodium and chloride ion transport. Down-regulates sodium-chloride cotransporter activity indirectly by inhibiting isoform 1, it associates with isoform 1 and attenuates its kinase activity. In kidney, may play an important role regulating sodium and potassium balance. The polypeptide is Serine/threonine-protein kinase WNK1 (Mus musculus (Mouse)).